The following is an 874-amino-acid chain: Pentatricopeptide repeat-containing protein At2g17140 (874 aa).

PPR repeat units lie at residues 111 to 145, 146 to 180, 181 to 215, 216 to 250, 251 to 285, 290 to 320, 325 to 359, 360 to 394, 395 to 429, 430 to 464, 465 to 499, 523 to 557, 558 to 592, 593 to 627, 628 to 662, 663 to 693, 697 to 731, 732 to 766, and 767 to 797; these read SVYL…GIAP, QTYT…GCKP, NEFT…GVLP, NKVI…GLVP, DIVT…EYLG, NSIT…IREN, SLQS…GIGP, SIYS…GVCP, DAVT…NCLP, NAYT…GYGL, DTVT…GSAA, DLIT…KLQP, DSVA…GCHK, SLET…GISP, NICT…NIAP, NVFS…AVSI, KEGL…GFEL, GTFL…GYGF, and DPAA…MMEM.

The protein belongs to the PPR family. P subfamily.

The protein is Pentatricopeptide repeat-containing protein At2g17140 of Arabidopsis thaliana (Mouse-ear cress).